Consider the following 306-residue polypeptide: tRNA dimethylallyltransferase (306 aa).

15-22 (GPTASGKS) contributes to the ATP binding site. 17-22 (TASGKS) provides a ligand contact to substrate. The interaction with substrate tRNA stretch occupies residues 40-43 (DSMQ).

Belongs to the IPP transferase family. In terms of assembly, monomer. Mg(2+) is required as a cofactor.

It catalyses the reaction adenosine(37) in tRNA + dimethylallyl diphosphate = N(6)-dimethylallyladenosine(37) in tRNA + diphosphate. Catalyzes the transfer of a dimethylallyl group onto the adenine at position 37 in tRNAs that read codons beginning with uridine, leading to the formation of N6-(dimethylallyl)adenosine (i(6)A). In Methylobacterium sp. (strain 4-46), this protein is tRNA dimethylallyltransferase.